The chain runs to 186 residues: NADH-quinone oxidoreductase subunit B (186 aa).

Positions 44, 45, 110, and 139 each coordinate [4Fe-4S] cluster.

This sequence belongs to the complex I 20 kDa subunit family. NDH-1 is composed of 14 different subunits. Subunits NuoB, C, D, E, F, and G constitute the peripheral sector of the complex. The cofactor is [4Fe-4S] cluster.

The protein localises to the cell inner membrane. It carries out the reaction a quinone + NADH + 5 H(+)(in) = a quinol + NAD(+) + 4 H(+)(out). Functionally, NDH-1 shuttles electrons from NADH, via FMN and iron-sulfur (Fe-S) centers, to quinones in the respiratory chain. The immediate electron acceptor for the enzyme in this species is believed to be ubiquinone. Couples the redox reaction to proton translocation (for every two electrons transferred, four hydrogen ions are translocated across the cytoplasmic membrane), and thus conserves the redox energy in a proton gradient. The protein is NADH-quinone oxidoreductase subunit B of Leptospira interrogans serogroup Icterohaemorrhagiae serovar copenhageni (strain Fiocruz L1-130).